Reading from the N-terminus, the 961-residue chain is ATPase 7, plasma membrane-type (961 aa).

The Cytoplasmic portion of the chain corresponds to 1 to 64 (MTDIEALKAI…EKKESKILKF (64 aa)). The helical transmembrane segment at 65–84 (LGFMWNPLSWVMEAAALMAI) threads the bilayer. Residues 85 to 96 (GLAHGGGKPADY) lie on the Extracellular side of the membrane. Residues 97–117 (HDFVGIVVLLLINSTISFVEE) form a helical membrane-spanning segment. At 118–246 (NNAGNAAAAL…GHFQKVLTAI (129 aa)) the chain is on the cytoplasmic side. A helical transmembrane segment spans residues 247-267 (GNFCICSIAVGMAIEIVVIYG). Over 268–276 (LQKRGYRVG) the chain is Extracellular. Residues 277–294 (IDNLLVLLIGGIPIAMPT) traverse the membrane as a helical segment. Over 295 to 643 (VLSVTMAIGA…TSRAIFQRMK (349 aa)) the chain is Cytoplasmic. Residue D332 is the 4-aspartylphosphate intermediate of the active site. Mg(2+) contacts are provided by D588 and D592. Residues 644–665 (NYTIYAVSITIRIVMGFMLLCV) traverse the membrane as a helical segment. Residues 666 to 670 (FWEFD) lie on the Extracellular side of the membrane. A helical transmembrane segment spans residues 671-693 (FPPFMVLVIAILNDGTIMTISKD). Topologically, residues 694–709 (RVKPSPTPDCWKLKEI) are cytoplasmic. A helical membrane pass occupies residues 710–730 (FATGVVLGAYLAIMTVVFFWA). The Extracellular portion of the chain corresponds to 731–764 (AYETNFFHNIFHVRNFNQHHFKMKDKKVAAHLNE). The chain crosses the membrane as a helical span at residues 765–785 (QMASAVYLQVSTISQALIFVT). Over 786-797 (RSRSWSFVERPG) the chain is Cytoplasmic. Residues 798 to 818 (FLLVIAFLIAQLVASVISAMA) traverse the membrane as a helical segment. The Extracellular portion of the chain corresponds to 819-826 (NWPFAGIR). A helical membrane pass occupies residues 827-847 (SIGWGWTGVIWIFNIVTYMLL). Residues 848–961 (DPIKFLVRYA…EDPNSNNYTI (114 aa)) are Cytoplasmic-facing. T894 is modified (phosphothreonine). S910 and S942 each carry phosphoserine. The segment at 959 to 961 (YTI) is interaction with 14-3-3 proteins. Position 960 is a phosphothreonine (T960).

The protein belongs to the cation transport ATPase (P-type) (TC 3.A.3) family. Type IIIA subfamily. As to quaternary structure, binds to 14-3-3 proteins. The binding is induced by phosphorylation of Thr-960. Binding to 14-3-3 proteins activates the H(+)-ATPase. In terms of tissue distribution, expressed in guard cells, roots and leaves, and barely in mesophyll cells.

Its subcellular location is the membrane. The enzyme catalyses ATP + H2O + H(+)(in) = ADP + phosphate + 2 H(+)(out). Its function is as follows. The plasma membrane H(+) ATPase of plants and fungi generates a proton gradient that drives the active transport of nutrients by H(+)-symport. The resulting external acidification and/or internal alkinization may mediate growth responses. The chain is ATPase 7, plasma membrane-type (AHA7) from Arabidopsis thaliana (Mouse-ear cress).